We begin with the raw amino-acid sequence, 441 residues long: Protein FAM83A (441 aa).

Disordered stretches follow at residues 81-108 (SNDN…MNSD) and 312-368 (GMSI…SPLQ). The span at 314-327 (SIMSDSNPESINTT) shows a compositional bias: polar residues. Over residues 328–354 (SEPFSSISTASISNDSQRPKSPVSTTP) the composition is skewed to low complexity.

It belongs to the FAM83 family.

It localises to the cytoplasm. Its function is as follows. May function in the epidermal growth factor receptor/EGFR signaling pathway. This is Protein FAM83A from Xenopus tropicalis (Western clawed frog).